Consider the following 326-residue polypeptide: tRNA-modifying protein YgfZ (326 aa).

Folate is bound by residues W27 and W189.

Belongs to the tRNA-modifying YgfZ family.

The protein resides in the cytoplasm. Folate-binding protein involved in regulating the level of ATP-DnaA and in the modification of some tRNAs. It is probably a key factor in regulatory networks that act via tRNA modification, such as initiation of chromosomal replication. The protein is tRNA-modifying protein YgfZ of Salmonella paratyphi C (strain RKS4594).